Here is a 358-residue protein sequence, read N- to C-terminus: 3-ketosteroid-9-alpha-monooxygenase, ferredoxin reductase component (358 aa).

The region spanning 12–124 (DHVLELQIAE…LAPSGNFVPT (113 aa)) is the FAD-binding FR-type domain. In terms of domain architecture, 2Fe-2S ferredoxin-type spans 269 to 358 (ATAVVELDGQ…SDSVEVTYDE (90 aa)). Residues cysteine 305, cysteine 310, cysteine 313, and cysteine 343 each contribute to the [2Fe-2S] cluster site.

Monomer. The two-component system 3-ketosteroid-9-alpha-monooxygenase is composed of an oxygenase component KshA and a reductase component KshB. Requires FAD as cofactor. The cofactor is [2Fe-2S] cluster.

It catalyses the reaction androsta-1,4-diene-3,17-dione + 2 reduced [2Fe-2S]-[ferredoxin] + O2 + 2 H(+) = 9alpha-hydroxyandrosta-1,4-diene-3,17-dione + 2 oxidized [2Fe-2S]-[ferredoxin] + H2O. It functions in the pathway lipid metabolism; steroid biosynthesis. In terms of biological role, involved in the degradation of cholesterol. Catalyzes the introduction of a 9a-hydroxyl moiety into 1,4-androstadiene-3,17-dione (ADD) to yield the 9alpha-hydroxy-1,4-androstadiene-3,17-dione (9OHADD) intermediate which spontaneously form 3-hydroxy-9,10-seconandrost-1,3,5(10)-triene-9,17-dione (HSA) via the meta-cleavage of ring B with concomitant aromatization of ring A. The polypeptide is 3-ketosteroid-9-alpha-monooxygenase, ferredoxin reductase component (hmp) (Mycobacterium tuberculosis (strain CDC 1551 / Oshkosh)).